Consider the following 39-residue polypeptide: Photosystem II reaction center protein X (39 aa).

A helical membrane pass occupies residues 10–30 (SSLVWAAVIVVIPAAVALVLI).

The protein belongs to the PsbX family. Type 1 subfamily. As to quaternary structure, PSII is composed of 1 copy each of membrane proteins PsbA, PsbB, PsbC, PsbD, PsbE, PsbF, PsbH, PsbI, PsbJ, PsbK, PsbL, PsbM, PsbT, PsbX, PsbY, Psb30/Ycf12, peripheral proteins PsbO, CyanoQ (PsbQ), PsbU, PsbV and a large number of cofactors. It forms dimeric complexes.

It is found in the cellular thylakoid membrane. Its function is as follows. Involved in the binding and/or turnover of quinones at the Q(B) site of photosystem II (PSII). PSII is a light-driven water plastoquinone oxidoreductase, using light energy to abstract electrons from H(2)O, generating a proton gradient subsequently used for ATP formation. This chain is Photosystem II reaction center protein X, found in Prochlorococcus marinus (strain MIT 9303).